We begin with the raw amino-acid sequence, 307 residues long: MPIKIPDTLPAFETLVQEGVRVMTETLAIRQDIRPLQIGLLNLMPNKIKTELQMARLVGASPLQVELSLIRIGGHKAKNTSEDHLLAFYQTWEEVKHRKFDGFIITGAPIELLPYEDVTYWPEMQEILDWTETNVHSTMNVCWGAMAAIYHFHGVPKYELKEKAFGVYRHRNLKPSSIYLNGFSDNFEVPVSRWTEVRRDDIEKSDELEILMESSEMGVCLVHEKRGRRLYMFNHVEYDSTSLSDEYFRDVNTGVPIKMPHNYFPHNDPALAPQNRWRSHAHLLFGNWINEIYQTTPFDVEEIGMDL.

Residue cysteine 142 is the Acyl-thioester intermediate of the active site. Substrate contacts are provided by lysine 163 and serine 192. Histidine 235 serves as the catalytic Proton acceptor. The active site involves glutamate 237. A substrate-binding site is contributed by arginine 249.

The protein belongs to the MetA family.

It localises to the cytoplasm. The enzyme catalyses L-homoserine + acetyl-CoA = O-acetyl-L-homoserine + CoA. Its pathway is amino-acid biosynthesis; L-methionine biosynthesis via de novo pathway; O-acetyl-L-homoserine from L-homoserine: step 1/1. In terms of biological role, transfers an acetyl group from acetyl-CoA to L-homoserine, forming acetyl-L-homoserine. The polypeptide is Homoserine O-acetyltransferase (Rhizobium leguminosarum bv. trifolii (strain WSM2304)).